The sequence spans 542 residues: Chaperonin GroEL (542 aa).

ATP contacts are provided by residues 30–33 (TLGP), K51, 87–91 (DGTTT), G415, 480–482 (NAA), and D496.

This sequence belongs to the chaperonin (HSP60) family. Forms a cylinder of 14 subunits composed of two heptameric rings stacked back-to-back. Interacts with the co-chaperonin GroES.

It is found in the cytoplasm. The enzyme catalyses ATP + H2O + a folded polypeptide = ADP + phosphate + an unfolded polypeptide.. Functionally, together with its co-chaperonin GroES, plays an essential role in assisting protein folding. The GroEL-GroES system forms a nano-cage that allows encapsulation of the non-native substrate proteins and provides a physical environment optimized to promote and accelerate protein folding. The polypeptide is Chaperonin GroEL (Tremblaya princeps).